A 184-amino-acid polypeptide reads, in one-letter code: Holliday junction branch migration complex subunit RuvA (184 aa).

The domain I stretch occupies residues 1 to 64 (MIVAVEGIIT…EDADLLYGFL (64 aa)). The interval 65-145 (DEKEKRMFEM…ANDGEQYKIE (81 aa)) is domain II. Residue glutamate 145 is a region of interest, flexible linker. A domain III region spans residues 145–184 (ETISALENLGFKRDKINKILLNCKSTNTADLIKEALKKLA).

This sequence belongs to the RuvA family. In terms of assembly, homotetramer. Forms an RuvA(8)-RuvB(12)-Holliday junction (HJ) complex. HJ DNA is sandwiched between 2 RuvA tetramers; dsDNA enters through RuvA and exits via RuvB. An RuvB hexamer assembles on each DNA strand where it exits the tetramer. Each RuvB hexamer is contacted by two RuvA subunits (via domain III) on 2 adjacent RuvB subunits; this complex drives branch migration. In the full resolvosome a probable DNA-RuvA(4)-RuvB(12)-RuvC(2) complex forms which resolves the HJ.

The protein resides in the cytoplasm. In terms of biological role, the RuvA-RuvB-RuvC complex processes Holliday junction (HJ) DNA during genetic recombination and DNA repair, while the RuvA-RuvB complex plays an important role in the rescue of blocked DNA replication forks via replication fork reversal (RFR). RuvA specifically binds to HJ cruciform DNA, conferring on it an open structure. The RuvB hexamer acts as an ATP-dependent pump, pulling dsDNA into and through the RuvAB complex. HJ branch migration allows RuvC to scan DNA until it finds its consensus sequence, where it cleaves and resolves the cruciform DNA. The protein is Holliday junction branch migration complex subunit RuvA of Campylobacter hominis (strain ATCC BAA-381 / DSM 21671 / CCUG 45161 / LMG 19568 / NCTC 13146 / CH001A).